A 224-amino-acid chain; its full sequence is Protein PLANT CADMIUM RESISTANCE 6 (224 aa).

A helical membrane pass occupies residues 131–151; it reads GMLYGLICCLFAIPCVYTCTF.

It belongs to the cornifelin family.

Its subcellular location is the membrane. Its function is as follows. May be involved in heavy metals transport. In Arabidopsis thaliana (Mouse-ear cress), this protein is Protein PLANT CADMIUM RESISTANCE 6 (PCR6).